A 520-amino-acid polypeptide reads, in one-letter code: Cholesterol side-chain cleavage enzyme, mitochondrial (520 aa).

Residues 1–39 constitute a mitochondrion transit peptide; that stretch reads MLARGLALRSVLVKGCQPFLSAPRECPGHPRVGTGEGAC. Cysteine 461 contributes to the heme binding site.

It belongs to the cytochrome P450 family. In terms of assembly, interacts with FDX1/adrenodoxin. Requires heme as cofactor.

It localises to the mitochondrion inner membrane. The enzyme catalyses 6 reduced [adrenodoxin] + cholesterol + 3 O2 + 6 H(+) = 4-methylpentanal + pregnenolone + 6 oxidized [adrenodoxin] + 4 H2O. The catalysed reaction is 2 reduced [adrenodoxin] + cholesterol + O2 + 2 H(+) = (22R)-hydroxycholesterol + 2 oxidized [adrenodoxin] + H2O. It carries out the reaction (22R)-hydroxycholesterol + 2 reduced [adrenodoxin] + O2 + 2 H(+) = (20R,22R)-20,22-dihydroxycholesterol + 2 oxidized [adrenodoxin] + H2O. It catalyses the reaction (20R,22R)-20,22-dihydroxycholesterol + 2 reduced [adrenodoxin] + O2 + 2 H(+) = 4-methylpentanal + pregnenolone + 2 oxidized [adrenodoxin] + 2 H2O. It participates in lipid metabolism; C21-steroid hormone metabolism. The protein operates within steroid metabolism; cholesterol metabolism. Its function is as follows. A cytochrome P450 monooxygenase that catalyzes the side-chain hydroxylation and cleavage of cholesterol to pregnenolone, the precursor of most steroid hormones. Catalyzes three sequential oxidation reactions of cholesterol, namely the hydroxylation at C22 followed with the hydroxylation at C20 to yield 20R,22R-hydroxycholesterol that is further cleaved between C20 and C22 to yield the C21-steroid pregnenolone and 4-methylpentanal. Mechanistically, uses molecular oxygen inserting one oxygen atom into a substrate and reducing the second into a water molecule. Two electrons are provided by NADPH via a two-protein mitochondrial transfer system comprising flavoprotein FDXR (adrenodoxin/ferredoxin reductase) and nonheme iron-sulfur protein FDX1 or FDX2 (adrenodoxin/ferredoxin). The sequence is that of Cholesterol side-chain cleavage enzyme, mitochondrial (CYP11A1) from Sus scrofa (Pig).